The following is a 136-amino-acid chain: Transcription antitermination protein NusB (136 aa).

This sequence belongs to the NusB family.

Functionally, involved in transcription antitermination. Required for transcription of ribosomal RNA (rRNA) genes. Binds specifically to the boxA antiterminator sequence of the ribosomal RNA (rrn) operons. The polypeptide is Transcription antitermination protein NusB (Kineococcus radiotolerans (strain ATCC BAA-149 / DSM 14245 / SRS30216)).